The sequence spans 380 residues: E3 ubiquitin-protein ligase PHF7 (380 aa).

The interval 1–23 (MRTIKEKKEHPRLRKTARTKKVT) is disordered. Over residues 10 to 23 (HPRLRKTARTKKVT) the composition is skewed to basic residues. The C2HC pre-PHD-type zinc finger occupies 30–68 (GPVCLLCFQEPGDPEKLGEFLQKDNLCVHYFCLILSSKL). Zn(2+) contacts are provided by C33, C36, H58, and C61. The interval 67–92 (KLPQKGQPNRGLHGFMPEDIKKEAAR) is required for interaction and ubiquitination of the nucleosome core particle. A PHD-type zinc finger spans residues 96–145 (KVCFVCKRKGAAIRCQKDQCVQNFHLPCGQERGCLSQFFGEYKSYCGKHR). 24 residues coordinate Zn(2+): C98, C101, C110, C115, H120, C123, C141, H144, C159, C162, C178, C179, H185, C188, C203, C206, C247, C252, C272, C275, H281, C284, C296, and C299. Residues 150 to 306 (IHQRSFGESC…NECLPASTED (157 aa)) form a required for interaction with ubiquitinated UBE2D2 region. The segment at 159–207 (CVLCCEDLSRASVENIRSPCCSQAIYHRKCIQKYAHTSAKHFFKCPQCN) adopts an RING-type; degenerate zinc-finger fold. Positions 243–300 (RYQHCDAPICLYEQGRDSFEDEGRWRLILCATCGSHGTHRDCSSLRPNSKKWECNECL) are required for association with and ubiquitination of H3. Positions 352 to 367 (EKPESSSGSSCQSWRS) are enriched in low complexity. The tract at residues 352-380 (EKPESSSGSSCQSWRSKGIKVTKDCKKSK) is disordered.

In terms of assembly, interacts with MEF2C; the interaction promotes MEF2C binding to its transcription targets. Interacts with GATA4; the interaction promotes GATA4 binding to its transcription targets. Interacts with UBE2D2; the interaction inhibits cleavage of PHF7 and promotes association of the complex with the nucleosome core particle.

The protein resides in the nucleus. The catalysed reaction is S-ubiquitinyl-[E2 ubiquitin-conjugating enzyme]-L-cysteine + [acceptor protein]-L-lysine = [E2 ubiquitin-conjugating enzyme]-L-cysteine + N(6)-ubiquitinyl-[acceptor protein]-L-lysine.. Its pathway is protein modification; protein ubiquitination. E3 ubiquitin-protein ligase which ubiquitinates histone H3 at 'Lys-14'. Required for male fertility, via inhibition of SPOP-mediated BRDT degradation when in the presence of acetylated histone H4 in early condensing spermatids. Stabilization of BRDT allows it to facilitate histone removal in early condensing spermatids and promote the progression of histone-to-protamine exchange. Promotes the expression of steroidogenesis proteins in the testes, and as a result plays a role in maintaining testosterone levels and repressing osteoclastogenesis. Promotes transcription of cardiac enhancer genes by facilitating binding of cardiac transcription factors such as MEF2C and GATA4 to target gene promoters. Ubiquitinates histone H4. Ubiquitinates histone H2A and H3 as part of the nucleosome core particle. The protein is E3 ubiquitin-protein ligase PHF7 of Rattus norvegicus (Rat).